Here is a 151-residue protein sequence, read N- to C-terminus: Ribosome maturation factor RimP (151 aa).

This sequence belongs to the RimP family.

It localises to the cytoplasm. Its function is as follows. Required for maturation of 30S ribosomal subunits. The protein is Ribosome maturation factor RimP of Aliivibrio fischeri (strain ATCC 700601 / ES114) (Vibrio fischeri).